The sequence spans 381 residues: Sulfite reductase, dissimilatory-type subunit beta (381 aa).

[4Fe-4S] cluster-binding residues include Cys-151, Cys-188, Cys-189, Cys-193, Cys-231, Cys-258, Cys-261, and Cys-264. Residue Cys-193 participates in siroheme binding. Positions Asn-249–Gly-276 constitute a 4Fe-4S ferredoxin-type domain.

As to quaternary structure, heterohexamer of two alpha, two beta and two gamma subunits. The cofactor is [4Fe-4S] cluster. Requires siroheme as cofactor.

The catalysed reaction is [DsrC protein]-trisulfide + NAD(+) + 3 H2O = [DsrC protein]-dithiol + sulfite + NADH + 3 H(+). Its function is as follows. Catalyzes the reduction of sulfite to sulfide. This is the terminal oxidation reaction in sulfate respiration, a process catalyzed by the sulfate-reducing bacteria. In Nitratidesulfovibrio vulgaris (strain ATCC 29579 / DSM 644 / CCUG 34227 / NCIMB 8303 / VKM B-1760 / Hildenborough) (Desulfovibrio vulgaris), this protein is Sulfite reductase, dissimilatory-type subunit beta (dsvB).